The following is a 251-amino-acid chain: DNA polymerase sliding clamp 2 (251 aa).

The protein belongs to the PCNA family. In terms of assembly, heterotrimer. The subunits circularize to form a toroid; DNA passes through its center. Replication factor C (RFC) is required to load the toroid on the DNA.

In terms of biological role, sliding clamp subunit that acts as a moving platform for DNA processing. Responsible for tethering the catalytic subunit of DNA polymerase and other proteins to DNA during high-speed replication. This chain is DNA polymerase sliding clamp 2, found in Aeropyrum pernix (strain ATCC 700893 / DSM 11879 / JCM 9820 / NBRC 100138 / K1).